The following is a 687-amino-acid chain: Polyphosphate kinase (687 aa).

Asn45 contacts ATP. Positions 375 and 405 each coordinate Mg(2+). Catalysis depends on His435, which acts as the Phosphohistidine intermediate. Residues Tyr472, Arg568, and His596 each contribute to the ATP site.

It belongs to the polyphosphate kinase 1 (PPK1) family. Mg(2+) is required as a cofactor. An intermediate of this reaction is the autophosphorylated ppk in which a phosphate is covalently linked to a histidine residue through a N-P bond.

It catalyses the reaction [phosphate](n) + ATP = [phosphate](n+1) + ADP. Its function is as follows. Catalyzes the reversible transfer of the terminal phosphate of ATP to form a long-chain polyphosphate (polyP). The protein is Polyphosphate kinase of Burkholderia ambifaria (strain ATCC BAA-244 / DSM 16087 / CCUG 44356 / LMG 19182 / AMMD) (Burkholderia cepacia (strain AMMD)).